Reading from the N-terminus, the 1079-residue chain is MSEKQTGSANGGLGKTLAQLEQVVSASLRPLPSQTGDGTYVTEQVKTGILKDLSHVDLGDLKTLVDVSKSALTGEALDDRKYIMERVIQLSAGLPSTSQIGKELTNTFLTTLWNDLEHPPISYLGRDAMYRRADGSGNNVLWPHIGAAGTPYARSVQPKTVQSPNLPDPETLFDCLLARKEYKEHPNKISSVLFYIASIIIHDLFETDRKDPAISLTSSYLDLSPLYGNNQQEQDLIRTFKDGKLKPDCFSTKRVLGFPPDVGVVLIMFNRFHNYVVEKLAMINEGGRFTKPQESDTAAYAKYDNDLFQTGRLVTCGLYVNIILKDYVRTILNINRTDSIWSLDPRSEMKDGLLGRAAAQATGNQVAAEFNLVYRWHSCISQRDQKWTEDMYQELFPGQDPSKISLQDFLRGLGRWEAKLPGEPRERPFAGLQRKADGSYDDNDLVKIFEESVEDCAGAFGALHVPTVFRSIEALGIQQARSWNLATLNEFRKYFNLAPYKTFEEINSDPYVADQLKRLYDHPDRVEIYPGIIVEDAKESMAPGSGLCTNFTISRAILSDAVALVRGDRFHTVDFTPKHLTNWAYNEIQPQDSVDQTHVFYKLVLRAFPNHFRGDSIYAHFPLVVPSENKKILTKLGTADKYSWDRPNYTPPPQFINSHSACMSILSDQETFKVTWGSKIEFLMRHNNQPYGRDFMLSGDRTPNAMSRQMMGKALYRDKWETEVKRFYENITLKLLHRYSYKLAGVNQVDVVRDIANLAQVHFCASVFSLPLKTESNPRGIFTESELYQIMAVVFTSIFYDADIGKSFELNQAARAVTQQLGQLTLANVELIAKTGFIANLVNSLHRHDVLSEYGVHMIQRLLDSGMPAPEIVWTHVLPTAGGMVANQAQLFSQSLDYYLSEEGSVHLPEINRLAKEDTTEADDLLLRYFMEGARIRSSVALPRVVAQPTVVEDNGQKITLKQGQHIICNLVSASMDPVTFPEPDKVKLDRDMNLYAHFGFGPHQCLGLGLCKTALTTMLKVIGRLDNLRRAPGGQGKLKKLSGPGGIAMYMTPDQTAFFPFPTTMKIQWDGDLPEVKE.

The interval 105-446 (TNTFLTTLWN…DGSYDDNDLV (342 aa)) is linoleate 8R-lipoxygenase. H202 provides a ligand contact to heme b. Y374 is a catalytic residue. A heme b-binding site is contributed by H377. The segment at 654–1079 (QFINSHSACM…WDGDLPEVKE (426 aa)) is 9,12-octadecadienoate 8-hydroperoxide 8R-isomerase.

The protein belongs to the peroxidase family. In terms of assembly, homotetramer. It depends on heme b as a cofactor.

The catalysed reaction is (9Z,12Z)-octadecadienoate + O2 = (8R,9Z,12Z)-8-hydroperoxyoctadeca-9,12-dienoate. The enzyme catalyses (8R,9Z,12Z)-8-hydroperoxyoctadeca-9,12-dienoate = (5S,8R,9Z,12Z)-5,8-dihydroxyoctadeca-9,12-dienoate. Its function is as follows. Bifunctional heme-containing enzyme that oxidizes linoleic acid to (8R,9Z,12Z)-8-hydroperoxyoctadeca-9,12-dienoate (within the N-terminal heme peroxidase domain), which is subsequently isomerized to (5S,8R,9Z,12Z)-5,8-dihydroxyoctadeca-9,12-dienoate (within the C-terminal P450 heme thiolate domain). Oxidized unsaturated fatty acids, so-called oxylipins, derived from endogenous fatty acids, influence the development of the asexual conidiophores and sexual cleistothecia and regulate the secondary metabolism. These substances were collectively named psi factors and are primarily a mixture of hydroxylated oleic, linoleic and alpha-linolenic acids. They are termed psi-beta, psi-alpha, and psi-gamma, respectively. Oxylipins may also serve as activators of mammalian immune responses contributing to enhanced resistance to opportunistic fungi and as factors that modulate fungal development contributing to resistance to host defenses. The chain is Psi-producing oxygenase A (ppoA) from Aspergillus fumigatus (strain ATCC MYA-4609 / CBS 101355 / FGSC A1100 / Af293) (Neosartorya fumigata).